The following is a 221-amino-acid chain: Transmembrane emp24 domain-containing protein 3 (221 aa).

A signal peptide spans 1–25 (MVHEAPHASSFQMLLQLLLLLLLRA). Over 28–184 (LRSAELTFEL…RAEDLNSRVS (157 aa)) the chain is Lumenal. A GOLD domain is found at 42-124 (KQCFHEEVEQ…HKTVYFDFQV (83 aa)). Arg103 is modified (dimethylated arginine). Residues 185-205 (YWSVGETIALFVVSFSQVLLL) form a helical membrane-spanning segment. Residues 206-221 (KSFFTEKRPVNRAVHS) are Cytoplasmic-facing. The COPII vesicle coat-binding signature appears at 208–209 (FF). The COPI vesicle coat-binding signature appears at 208 to 221 (FFTEKRPVNRAVHS).

The protein belongs to the EMP24/GP25L family. As to quaternary structure, monomer in endoplasmic reticulum, endoplasmic reticulum-Golgi intermediate compartment and cis-Golgi network. Interacts (via C-terminus) with COPG1; the interaction involves dimeric TMED3; however, there are conflicting reports on the interaction. Interacts with GORASP1 and GORASP2.

The protein localises to the endoplasmic reticulum-Golgi intermediate compartment membrane. The protein resides in the golgi apparatus. It localises to the cis-Golgi network membrane. It is found in the golgi stack membrane. Its subcellular location is the endoplasmic reticulum membrane. The protein localises to the cytoplasmic vesicle. The protein resides in the COPI-coated vesicle membrane. Its function is as follows. Potential role in vesicular protein trafficking, mainly in the early secretory pathway. Contributes to the coupled localization of TMED2 and TMED10 in the cis-Golgi network. The polypeptide is Transmembrane emp24 domain-containing protein 3 (Tmed3) (Mus musculus (Mouse)).